We begin with the raw amino-acid sequence, 92 residues long: Subtilisin inhibitor 1 (92 aa).

Residues 1 to 12 (QEQGTNPSQEQN) show a composition bias toward polar residues. The tract at residues 1-31 (QEQGTNPSQEQNVPLPRNYKQALETNTPTKT) is disordered.

The protein belongs to the protease inhibitor I13 (potato type I serine protease inhibitor) family.

Its function is as follows. Inhibitor of subtilisin. This chain is Subtilisin inhibitor 1, found in Phaseolus angularis (Azuki bean).